A 616-amino-acid chain; its full sequence is Probable galacturonosyltransferase 4 (616 aa).

At 1–6 the chain is on the cytoplasmic side; it reads MMVKLR. The chain crosses the membrane as a helical; Signal-anchor for type II membrane protein span at residues 7 to 29; sequence NLVLFFMLLTVVAHILLYTDPAA. Residues 30-616 are Lumenal-facing; sequence SFKTPFSKRD…VYLRECNINP (587 aa). Positions 132–152 are disordered; sequence QTSEKVDEQPEPNAFGAKKDT. Asn291, Asn326, Asn378, Asn481, and Asn514 each carry an N-linked (GlcNAc...) asparagine glycan.

The protein belongs to the glycosyltransferase 8 family. Expressed in roots, inflorescences, siliques, leaves and stems.

It localises to the golgi apparatus membrane. It participates in glycan metabolism; pectin biosynthesis. Its function is as follows. May be involved in pectin and/or xylans biosynthesis in cell walls. This is Probable galacturonosyltransferase 4 (GAUT4) from Arabidopsis thaliana (Mouse-ear cress).